Consider the following 150-residue polypeptide: Large ribosomal subunit protein uL15 (150 aa).

Positions 18–43 (IVGRGSSSGWGKTSGKGHKGQQARSG) are disordered.

This sequence belongs to the universal ribosomal protein uL15 family. In terms of assembly, part of the 50S ribosomal subunit.

Its function is as follows. Binds to the 23S rRNA. In Treponema denticola (strain ATCC 35405 / DSM 14222 / CIP 103919 / JCM 8153 / KCTC 15104), this protein is Large ribosomal subunit protein uL15.